We begin with the raw amino-acid sequence, 1135 residues long: Potassium channel subfamily T member 2 (1135 aa).

Over 1 to 63 (MVDLESEVPP…KNQRSSLRIR (63 aa)) the chain is Cytoplasmic. Residues 64–84 (LFNFSLKLLSCLLYIIRVLLE) traverse the membrane as a helical segment. The Extracellular segment spans residues 85–101 (NPSQGNEWSHIFWVNRS). A glycan (N-linked (GlcNAc...) asparagine) is linked at N99. Residues 102–122 (LPLWGLQVSVALISLFETILL) form a helical membrane-spanning segment. The Cytoplasmic portion of the chain corresponds to 123 to 137 (GYLSYKGNIWEQILR). A helical transmembrane segment spans residues 138–158 (IPFILEIINAVPFIISIFWPS). The Extracellular portion of the chain corresponds to 159–164 (LRNLFV). A helical transmembrane segment spans residues 165-185 (PVFLNCWLAKHALENMINDLH). Topologically, residues 186 to 198 (RAIQRTQSAMFNQ) are cytoplasmic. The helical transmembrane segment at 199–219 (VLILISTLLCLIFTCICGIQH) threads the bilayer. The Extracellular segment spans residues 220 to 228 (LERIGKKLN). An intramembrane region (pore-forming) is located at residues 229–249 (LFDSLYFCIVTFSTVGFGDVT). The Extracellular portion of the chain corresponds to 250 to 256 (PETWSSK). Residues 257–277 (LFVVAMICVALVVLPIQFEQL) form a helical membrane-spanning segment. The Cytoplasmic segment spans residues 278 to 1135 (AYLWMERQKS…GQDSREETQL (858 aa)). RCK N-terminal domains lie at 299–435 (EKHV…DHVV) and 718–858 (NKLI…CYSL). Disordered regions lie at residues 977 to 1010 (VEEW…HPLL), 1017 to 1036 (WARR…AEKI), and 1113 to 1135 (SEPS…ETQL). Residues 1017 to 1030 (WARRLSRKGPKHSG) are compositionally biased toward basic residues. Positions 1118–1127 (RNSICNVTGQ) are enriched in polar residues.

It belongs to the potassium channel family. Calcium-activated (TC 1.A.1.3) subfamily. KCa4.2/KCNT2 sub-subfamily. In terms of assembly, homotetramer. Forms heteromeric channels with KCNT1; these heterodimer channels differ from the homomers in their unitary conductance, kinetic behavior, subcellular localization, and response to activation of protein kinase C. Phosphorylated by protein kinase C. Phosphorylation of the C-terminal domain inhibits channel activity.

It is found in the cell membrane. It carries out the reaction K(+)(in) = K(+)(out). Its activity is regulated as follows. Are normally in a closed state unless activated by an increase in intracellular Na(+) and Cl(-). Inhibited upon stimulation of G-protein coupled receptors, such as CHRM1 and GRM1. There is conflicting data about the effect of ATP on KNCT2 channels activity. Intracellular ATP was initially report to inhibit the channel activity. However, others studies conclude that KNCT2 channels are not inhibited by intracellular ATP. Sodium-activated and chloride-activated potassium channel. Produces rapidly activating outward rectifier K(+) currents. Contributes to regulate neuronal excitability. The chain is Potassium channel subfamily T member 2 (KCNT2) from Homo sapiens (Human).